The following is a 319-amino-acid chain: Urease accessory protein UreD (319 aa).

The interval 254-273 (PDPVGSPAARRESVPAKRAE) is disordered. Residues 262–273 (ARRESVPAKRAE) show a composition bias toward basic and acidic residues.

It belongs to the UreD family. As to quaternary structure, ureD, UreF and UreG form a complex that acts as a GTP-hydrolysis-dependent molecular chaperone, activating the urease apoprotein by helping to assemble the nickel containing metallocenter of UreC. The UreE protein probably delivers the nickel.

It localises to the cytoplasm. Its function is as follows. Required for maturation of urease via the functional incorporation of the urease nickel metallocenter. This chain is Urease accessory protein UreD, found in Frankia casuarinae (strain DSM 45818 / CECT 9043 / HFP020203 / CcI3).